The chain runs to 587 residues: Folylpolyglutamate synthase, mitochondrial (587 aa).

The N-terminal 42 residues, 1–42 (MSWARSRLCSTLSLAAVSARGATTEGAARRGMSAWPAPQEPG), are a transit peptide targeting the mitochondrion. 106–109 (GKGS) is a binding site for ATP. Residues S130, E200, and H228 each coordinate Mg(2+). Positions 363 and 377 each coordinate ATP. Residue S539 is modified to Phosphoserine.

It belongs to the folylpolyglutamate synthase family. As to quaternary structure, monomer. A monovalent cation is required as a cofactor. With non-specific probe, highest content in kidney and liver and lowest in spleen, lung and small intestine, and readily detectable in all of the tumors except hepatoma. Isoform 1 and isoform 2 expressed in leukemic cells and isoform 4 and isoform 5 in liver cells. Isoform 1 and isoform 2 exclusively expressed in hepatoma and Lewis lung carcinoma. Isoform 1 and isoform 2 also expressed in bone marrow, small intestine and spleen. Kidney expresses isoform 1, isoform 2, isoform 4 and isoform 5.

The protein resides in the mitochondrion inner membrane. It localises to the mitochondrion matrix. Its subcellular location is the cytoplasm. The enzyme catalyses (6S)-5,6,7,8-tetrahydrofolyl-(gamma-L-Glu)(n) + L-glutamate + ATP = (6S)-5,6,7,8-tetrahydrofolyl-(gamma-L-Glu)(n+1) + ADP + phosphate + H(+). It participates in cofactor biosynthesis; tetrahydrofolylpolyglutamate biosynthesis. Its activity is regulated as follows. Inhibited by ammonium sulfate. Inhibited by pentaglutamate derivative of DDATHF, but isoform 2 is inhibited to a greater extent at lower concentrations of the compound that is isoform 5. Isoform 5 is virtually unaffected by H(4)PteGlu(5) and 5,10-CH(2)-H(4)PteGlu(5) at concentrations that substantially inhibits the activity of isoform 2. Isoform 2 and 5 are equally sensitive to polyglutamates of 10-CHO-H(4)-PteGlu. Functionally, catalyzes conversion of folates to polyglutamate derivatives allowing concentration of folate compounds in the cell and the intracellular retention of these cofactors, which are important substrates for most of the folate-dependent enzymes that are involved in one-carbon transfer reactions involved in purine, pyrimidine and amino acid synthesis. Dihydrofolate, tetrahydrofolate, 5,10-methylenetetrahydrofolate, 10-formyltetrahydrofolate and 5-formyltetrahydrofolate are the best substrates. Folic acid and 5-methyltetrahydrofolate can also act as substrates. This Mus musculus (Mouse) protein is Folylpolyglutamate synthase, mitochondrial (Fpgs).